A 765-amino-acid chain; its full sequence is MNGEADCPTDLEMAAPKGQDRWSQEDMLTLLECMKNNLPSNDSSKFKTTESHMDWEKVAFKDFSGDMCKLKWVEISNEVRKFRTLTELILDAQEHVKNPYKGKKLKKHPDFPKKPLTPYFRFFMEKRAKYAKLHPEMSNLDLTKILSKKYKELPEKKKMKYIQDFQREKQEFERNLARFREDHPDLIQNAKKSDIPEKPKTPQQLWYTHEKKVYLKVRPDATTKEVKDSLGKQWSQLSDKKTLKWIHKALEQRKEYEEIMRDYIQKHPELNISEEGITKSTLTKAERQLKDKFDGRPTKPPPNSYSLYCAELMANMKDVPSTERMVLCSQQWKLLSQKEKDAYHKKCDQKKKDYEVELLRFLESLPEEEQQRVLGEEKMLNINKKQTTSPASKKPSQEGGKGGSEKPKRPVSAMFIFSEEKRRQLQEERPELSESELTRLLARMWNDLTEKKKAKYKAREAALKAQSERKPGGEREDRGKLPESPKRAEEIWQQSVIGDYLARFKNDRVKALKAMEMTWNNMEKKEKLMWIKKAAEDQKRYERELSEMRAPPAATNSSKKMKFQGEPKKPPMNGYQKFSQELLSNGELNHLPLKERMVEIGSRWQRISQSQKEHYKKLAEEQQRQYKVHLDLWVKSLSPQDRAAYKEYISNKRKNMTKLRGPNPKSSRTTLQSKSESEEDDDEEEEDDEEEEEEEEDDENGDSSEDGGDSSESSSEDESEDGDENDDDDDDEDDEDDDDEDEDNESEGSSSSSSSSGDSSDSGSN.

Met1 is subject to N-acetylmethionine. The tract at residues 1-21 is disordered; the sequence is MNGEADCPTDLEMAAPKGQDR. DNA-binding regions (HMG box) lie at residues 112 to 180 and 196 to 264; these read PKKP…ARFR and PEKP…RDYI. Thr201 carries the post-translational modification Phosphothreonine. 3 positions are modified to phosphoserine: Ser273, Ser336, and Ser364. Residues 298 to 362 constitute a DNA-binding region (HMG box 3); the sequence is TKPPPNSYSL…DYEVELLRFL (65 aa). The span at 370 to 379 shows a compositional bias: basic and acidic residues; it reads QQRVLGEEKM. The interval 370-411 is disordered; the sequence is QQRVLGEEKMLNINKKQTTSPASKKPSQEGGKGGSEKPKRPV. Phosphoserine is present on residues Ser389, Ser412, Ser433, Ser435, Ser484, Ser495, Ser546, Ser584, and Ser638. DNA-binding regions (HMG box) lie at residues 407–475, 482–549, and 568–634; these read PKRP…GGER, PESP…SEMR, and KKPP…DLWV. Positions 456–487 are disordered; sequence YKAREAALKAQSERKPGGEREDRGKLPESPKR. Residues 457–487 show a composition bias toward basic and acidic residues; the sequence is KAREAALKAQSERKPGGEREDRGKLPESPKR. The interval 546–576 is disordered; the sequence is SEMRAPPAATNSSKKMKFQGEPKKPPMNGYQ. Residues 649–765 form a disordered region; sequence ISNKRKNMTK…SGDSSDSGSN (117 aa). A compositionally biased stretch (polar residues) spans 664 to 674; it reads PKSSRTTLQSK. Positions 677-746 are enriched in acidic residues; sequence SEEDDDEEEE…DDDEDEDNES (70 aa). Residues 747 to 765 show a composition bias toward low complexity; it reads EGSSSSSSSSGDSSDSGSN.

Homodimer. Part of Pol I pre-initiation complex (PIC), in which Pol I core assembles with RRN3 and promoter-bound UTBF and SL1/TIF-IB complex. Interacts with TOP2A in the context of Pol I complex. Interacts with TBP. Interacts with TAF1A. Interacts with RASL11A. Binds to IRS1 and PIK3CA. Interacts with DHX33. Interacts with PHF6. Interacts with CEBPA (isoform 1 and isoform 4). Interacts with DDX11. Interacts with NOP53. Interacts with ALKBH2. In terms of processing, phosphorylated and activated by PIK3CA.

The protein resides in the nucleus. It localises to the nucleolus. Its function is as follows. Recognizes the ribosomal RNA gene promoter and activates transcription mediated by RNA polymerase I through cooperative interactions with the transcription factor SL1/TIF-IB complex. It binds specifically to the upstream control element. This Mus musculus (Mouse) protein is Nucleolar transcription factor 1 (Ubtf).